Consider the following 461-residue polypeptide: tRNA modification GTPase MnmE (461 aa).

Residues Arg-23, Glu-88, and Arg-127 each contribute to the (6S)-5-formyl-5,6,7,8-tetrahydrofolate site. The TrmE-type G domain maps to 223–383 (GLNTVIVGKP…LKECIKNLFF (161 aa)). Residue Asn-233 coordinates K(+). GTP-binding positions include 233-238 (NVGKSS), 252-258 (TEIPGTT), and 277-280 (DTAG). Ser-237 provides a ligand contact to Mg(2+). Residues Thr-252, Ile-254, and Thr-257 each contribute to the K(+) site. Thr-258 serves as a coordination point for Mg(2+). Lys-461 is a (6S)-5-formyl-5,6,7,8-tetrahydrofolate binding site.

Belongs to the TRAFAC class TrmE-Era-EngA-EngB-Septin-like GTPase superfamily. TrmE GTPase family. In terms of assembly, homodimer. Heterotetramer of two MnmE and two MnmG subunits. K(+) is required as a cofactor.

The protein resides in the cytoplasm. Its function is as follows. Exhibits a very high intrinsic GTPase hydrolysis rate. Involved in the addition of a carboxymethylaminomethyl (cmnm) group at the wobble position (U34) of certain tRNAs, forming tRNA-cmnm(5)s(2)U34. The sequence is that of tRNA modification GTPase MnmE from Clostridium botulinum (strain Okra / Type B1).